The following is a 348-amino-acid chain: Guanine nucleotide-binding protein alpha-13 subunit (348 aa).

Glycine 2 carries N-myristoyl glycine lipidation. Residue cysteine 3 is the site of S-palmitoyl cysteine attachment. The G-alpha domain maps to 34–348; sequence SHIRLLLLGS…VFKDIAKRKK (315 aa). Positions 37-50 are G1 motif; sequence RLLLLGSAESGKTT. Residues 42-49, 176-182, 201-205, 270-273, and alanine 326 each bind GTP; these read GSAESGKT, IMAYVPT, DIGGQ, and NEID. Residues 174–182 form a G2 motif region; sequence DLIMAYVPT. Threonine 182 is a binding site for Mg(2+). Residues 197–206 form a G3 motif region; it reads FQLFDIGGQK. The segment at 266-273 is G4 motif; the sequence is YLFLNEID. The interval 324–329 is G5 motif; the sequence is CIAIDT.

It belongs to the G-alpha family. In terms of assembly, g proteins are composed of 3 units; alpha, beta and gamma. The alpha chain contains the guanine nucleotide binding site.

Guanine nucleotide-binding proteins (G proteins) are involved as modulators or transducers in various transmembrane signaling systems. The protein is Guanine nucleotide-binding protein alpha-13 subunit (gpa-13) of Caenorhabditis elegans.